The primary structure comprises 410 residues: D-3-phosphoglycerate dehydrogenase (410 aa).

Residues 161–162, Asp-181, 238–240, and Asp-264 each bind NAD(+); these read HI and ASR. Arg-240 is an active-site residue. Glu-269 is an active-site residue. His-292 (proton donor) is an active-site residue. Residue 292–295 participates in NAD(+) binding; the sequence is HIGG. Positions 339-410 constitute an ACT domain; sequence RLMHIHENRP…PGTIRARLLY (72 aa).

This sequence belongs to the D-isomer specific 2-hydroxyacid dehydrogenase family. In terms of assembly, homotetramer.

The enzyme catalyses (2R)-3-phosphoglycerate + NAD(+) = 3-phosphooxypyruvate + NADH + H(+). It catalyses the reaction (R)-2-hydroxyglutarate + NAD(+) = 2-oxoglutarate + NADH + H(+). Its pathway is amino-acid biosynthesis; L-serine biosynthesis; L-serine from 3-phospho-D-glycerate: step 1/3. With respect to regulation, in bacteria displays feedback inhibition by L-serine. Catalyzes the reversible oxidation of 3-phospho-D-glycerate to 3-phosphonooxypyruvate, the first step of the phosphorylated L-serine biosynthesis pathway. Also catalyzes the reversible oxidation of 2-hydroxyglutarate to 2-oxoglutarate. The protein is D-3-phosphoglycerate dehydrogenase (serA) of Escherichia coli O6:H1 (strain CFT073 / ATCC 700928 / UPEC).